Consider the following 204-residue polypeptide: Cytochrome c biogenesis ATP-binding export protein CcmA (204 aa).

The region spanning Leu3 to Leu204 is the ABC transporter domain. Gly35 to Thr42 is an ATP binding site.

It belongs to the ABC transporter superfamily. CcmA exporter (TC 3.A.1.107) family. As to quaternary structure, the complex is composed of two ATP-binding proteins (CcmA) and two transmembrane proteins (CcmB).

It is found in the cell membrane. The catalysed reaction is heme b(in) + ATP + H2O = heme b(out) + ADP + phosphate + H(+). Part of the ABC transporter complex CcmAB involved in the biogenesis of c-type cytochromes; once thought to export heme, this seems not to be the case, but its exact role is uncertain. Responsible for energy coupling to the transport system. The chain is Cytochrome c biogenesis ATP-binding export protein CcmA from Ruegeria pomeroyi (strain ATCC 700808 / DSM 15171 / DSS-3) (Silicibacter pomeroyi).